Here is a 653-residue protein sequence, read N- to C-terminus: TRAF3-interacting protein 1 (653 aa).

An abolishes microtubules binding when missing region spans residues 1 to 306 (MNAAVVRRTQ…ADKSEKKADI (306 aa)). The tract at residues 134–467 (GDSRGRVLRT…DSQNSDNEDD (334 aa)) is disordered. Composition is skewed to basic and acidic residues over residues 145-305 (KAQE…KKAD), 325-335 (NSLEGRKEDNI), and 370-384 (ENAE…KGDS). Residues 229–653 (RAKQDRDRNN…VHSINLSSRR (425 aa)) are DISC1-interaction domain. Phosphoserine is present on serine 437. A compositionally biased stretch (polar residues) spans 448–462 (SGKTVSTVIIDSQNS). The stretch at 533 to 628 (AWKKEKDIVS…IKDQQDKICA (96 aa)) forms a coiled coil.

The protein belongs to the TRAF3IP1 family. Component of the IFT complex B, at least composed of IFT20, IFT22, IFT25, IFT27, IFT46, IFT52, TRAF3IP1/IFT54, IFT57, IFT74, IFT80, IFT81, and IFT88. Interacts with IFT88. Interacts with IL13RA1. Binds to microtubules, TRAF3 and DISC1. Interacts with MAP4.

It is found in the cytoplasm. The protein localises to the cytoskeleton. It localises to the cell projection. The protein resides in the cilium. Its subcellular location is the cilium axoneme. It is found in the cilium basal body. Functionally, plays an inhibitory role on IL13 signaling by binding to IL13RA1. Involved in suppression of IL13-induced STAT6 phosphorylation, transcriptional activity and DNA-binding. Recruits TRAF3 and DISC1 to the microtubules. Involved in kidney development and epithelial morphogenesis. Involved in the regulation of microtubule cytoskeleton organization. Is a negative regulator of microtubule stability, acting through the control of MAP4 levels. Involved in ciliogenesis. This is TRAF3-interacting protein 1 (Traf3ip1) from Rattus norvegicus (Rat).